Here is a 35-residue protein sequence, read N- to C-terminus: SPEVMKSLSENFCKAMDQCKQELNLPDEVIKDLYN.

Belongs to the PBP/GOBP family. In terms of tissue distribution, antenna.

Functionally, this major soluble protein in olfactory sensilla of male moths might serve to solubilize the extremely hydrophobic pheromone molecules and to transport pheromone through the aqueous lymph to receptors located on olfactory cilia. This chain is Pheromone-binding protein, found in Hyalophora cecropia (Cecropia moth).